We begin with the raw amino-acid sequence, 367 residues long: Sulfate/thiosulfate import ATP-binding protein CysA 2 (367 aa).

The ABC transporter domain maps to 3–237; that stretch reads VRVQNIRKEF…PVSPFVYGFI (235 aa). 35 to 42 lines the ATP pocket; sequence GPSGSGKT.

It belongs to the ABC transporter superfamily. Sulfate/tungstate importer (TC 3.A.1.6) family. The complex is composed of two ATP-binding proteins (CysA), two transmembrane proteins (CysT and CysW) and a solute-binding protein (CysP).

It is found in the cell inner membrane. The enzyme catalyses sulfate(out) + ATP + H2O = sulfate(in) + ADP + phosphate + H(+). It carries out the reaction thiosulfate(out) + ATP + H2O = thiosulfate(in) + ADP + phosphate + H(+). Part of the ABC transporter complex CysAWTP involved in sulfate/thiosulfate import. Responsible for energy coupling to the transport system. In Rhizobium meliloti (strain 1021) (Ensifer meliloti), this protein is Sulfate/thiosulfate import ATP-binding protein CysA 2.